Reading from the N-terminus, the 360-residue chain is Chorismate synthase (360 aa).

Arg48 and Arg54 together coordinate NADP(+). FMN is bound by residues Arg125–Ser127, Asn246–Ala247, Gly286, Lys301–Ser305, and Arg327.

Belongs to the chorismate synthase family. As to quaternary structure, homotetramer. FMNH2 is required as a cofactor.

The enzyme catalyses 5-O-(1-carboxyvinyl)-3-phosphoshikimate = chorismate + phosphate. It participates in metabolic intermediate biosynthesis; chorismate biosynthesis; chorismate from D-erythrose 4-phosphate and phosphoenolpyruvate: step 7/7. In terms of biological role, catalyzes the anti-1,4-elimination of the C-3 phosphate and the C-6 proR hydrogen from 5-enolpyruvylshikimate-3-phosphate (EPSP) to yield chorismate, which is the branch point compound that serves as the starting substrate for the three terminal pathways of aromatic amino acid biosynthesis. This reaction introduces a second double bond into the aromatic ring system. This Haemophilus ducreyi (strain 35000HP / ATCC 700724) protein is Chorismate synthase.